The following is a 329-amino-acid chain: MATRPQPLSVEPEGSADLLHGPEGARGRRGSTQKIEDLMEMVEKLQKVGSLEPRIEVLINRINEVQQAKKKASEELGEAQTVWDTLQKEVDSLHEEKVRLKDILNRKEETLRIMQLHCQEKESEAERKHSMLQECKDRISFLNNQIDNEKAKLRRLRLDFEEHLETLMSQHKDTMEFHKPEHLTEEMSVLDSSKEQLLKEEKLIKAKLEDVQHRLCALCGPEGSSTFSDGLFLRSHEAAAAMQMFKDENKKAEELLEAAAQQHQQLQQRCRQLQQKRQRLKEELEKHGVQILAQIQSTQKEEDSSWRTASPKPLEAHKETVQERPSSRT.

The interval methionine 1–glutamine 33 is disordered. 2 coiled-coil regions span residues arginine 28–methionine 168 and lysine 194–glutamine 294. The segment at isoleucine 295–threonine 329 is disordered. Over residues leucine 314–threonine 329 the composition is skewed to basic and acidic residues.

The protein belongs to the SYCE family. In terms of assembly, homodimer. Found in a complex with SYCP1 and SYCE2. Interacts with SYCP1, SYCE2 and SYCE3. Interacts with SIX6OS1.

The protein resides in the nucleus. It localises to the chromosome. Functionally, major component of the transverse central element of synaptonemal complexes (SCS), formed between homologous chromosomes during meiotic prophase. Requires SYCP1 in order to be incorporated into the central element. May have a role in the synaptonemal complex assembly, stabilization and recombination. In Rattus norvegicus (Rat), this protein is Synaptonemal complex central element protein 1 (Syce1).